Consider the following 127-residue polypeptide: MAIWQGKSMKKPSGGRAKMNRGKRKYELGREPAETKIGDRRVRLIRTRGGNTKVRLASDTRINVVDPETGKVEIAEIRNVVENTANPHFVRRNIITRGAVVETNLGNVRVTSRPGQDGVINGVLIRE.

Residues 1–33 (MAIWQGKSMKKPSGGRAKMNRGKRKYELGREPA) form a disordered region.

Belongs to the eukaryotic ribosomal protein eS8 family. Part of the 30S ribosomal subunit.

The chain is Small ribosomal subunit protein eS8 (rps8e) from Methanothermobacter thermautotrophicus (strain ATCC 29096 / DSM 1053 / JCM 10044 / NBRC 100330 / Delta H) (Methanobacterium thermoautotrophicum).